Reading from the N-terminus, the 123-residue chain is Large ribosomal subunit protein bL12 (123 aa).

The protein belongs to the bacterial ribosomal protein bL12 family. In terms of assembly, homodimer. Part of the ribosomal stalk of the 50S ribosomal subunit. Forms a multimeric L10(L12)X complex, where L10 forms an elongated spine to which 2 to 4 L12 dimers bind in a sequential fashion. Binds GTP-bound translation factors.

Its function is as follows. Forms part of the ribosomal stalk which helps the ribosome interact with GTP-bound translation factors. Is thus essential for accurate translation. In Photorhabdus laumondii subsp. laumondii (strain DSM 15139 / CIP 105565 / TT01) (Photorhabdus luminescens subsp. laumondii), this protein is Large ribosomal subunit protein bL12.